The following is a 4760-amino-acid chain: Nonribosomal peptide synthetase cm3A (4760 aa).

A compositionally biased stretch (polar residues) spans 1 to 12 (MKHLASSENMPT). Residues 1–24 (MKHLASSENMPTPAQDRAPSPSAM) form a disordered region. Residues 19-95 (PSPSAMQQEI…ELSRSAECQL (77 aa)) form the Carrier 1 domain. An O-(pantetheine 4'-phosphoryl)serine modification is found at serine 56. 2 condensation regions span residues 142 to 570 (QDIF…EIEQ) and 178 to 571 (PGLS…IEQL). Positions 591-984 (DEQARLCPDA…GRRDTQVKLR (394 aa)) are adenylation 1. One can recognise a Carrier 2 domain in the interval 1120–1197 (REATTLQLQI…KLTEKLGVPE (78 aa)). Serine 1158 bears the O-(pantetheine 4'-phosphoryl)serine mark. Condensation stretches follow at residues 1210–1654 (FPLS…KTPS) and 1689–2125 (VEDM…NVTT). The adenylation 2 stretch occupies residues 2171 to 2551 (DGDLTYFELD…DRKDWQIKIR (381 aa)). One can recognise a Carrier 3 domain in the interval 2684–2762 (LPSSETEKTV…ELAHAIDQRS (79 aa)). O-(pantetheine 4'-phosphoryl)serine is present on serine 2721. The condensation 4 stretch occupies residues 2811–3203 (VEDIYPCTPL…RFKHIFGQLS (393 aa)). The interval 3255-3647 (SATTPDRPAV…GRADQQLKIR (393 aa)) is adenylation 3. The Carrier 4 domain occupies 3783 to 3857 (TRTEELMQSV…QLAQRATTDA (75 aa)). Condensation regions lie at residues 3869 to 4296 (EFRL…TLLC) and 4340 to 4757 (EDIY…EEMG).

The protein belongs to the nrps family.

The protein operates within secondary metabolite biosynthesis. Its function is as follows. Nonribosomal peptide synthetase; part of the gene cluster that mediates the biosynthesis of beauveriolides I and III, cyclodepsipeptides acting as inhibitors of the acyl-CoA:cholesterol acyltransferase. The HR-PKS cm3B initiates the biosynthesis of beauveriolides by iteratively catalyzing the formation of the linear polyketide chain. The ATP-dependent acetyl-CoA ligase cm3D converts the polyketide carboxylic acid to a CoA thioester which id shuttled to the first T domain in the NRPS cm3A by the acetyltransferase cm3C. Cm3A contains 13 domains and assembles the polyketide chain, L-phenylalanine, L-alanine, and D-leucine (or D-allo-isoleucine) to form beauveriolide I (or beauveriolide III). The production of both beauveriolides I and III suggests the substrate adaptability of cm3B, using different amino acids as substrates. This chain is Nonribosomal peptide synthetase cm3A, found in Cordyceps militaris (strain CM01) (Caterpillar fungus).